The sequence spans 392 residues: MLAQSIRDCILWIRKTPDRALRAAKEAADLYQNIQQESRIYQNLRGANDATVILYLDKELSQYERTVKLRLQEFRVSSALLRGFEASQTESAETKKMVEEIEMAISRSQFLRSILSASSVKTHKPLAFEKTGIIPRSIPRTFDRLRRELLASSEDLVVQEFRISRYQTLTSLKFLASLIWIPWIVSWFLRVWWLEPTITMFWNQDQTQLFLHRSQEERALSDMRAFQEKVYFEVLVGEAPDPTPEVLQRRIQAKARDLAEASNQNSIESLANLGSDILACLILLAMLSLEKTKIAVLKSFLDELIYSLNDATKAFFLILVTDVFVGFHSTHGWEVILELLFAHFGFPESKKFIFMFVATFPVLLDTVFKYWIFRYLNHISPSTVAVYHNMNE.

4 helical membrane-spanning segments follow: residues 174-194 (FLASLIWIPWIVSWFLRVWWL), 269-289 (SLANLGSDILACLILLAMLSL), 316-336 (FLILVTDVFVGFHSTHGWEVI), and 352-372 (FIFMFVATFPVLLDTVFKYWI).

This sequence belongs to the CemA family.

The protein localises to the plastid. It is found in the chloroplast inner membrane. It catalyses the reaction K(+)(in) + H(+)(out) = K(+)(out) + H(+)(in). In terms of biological role, contributes to K(+)/H(+) antiport activity by supporting proton efflux to control proton extrusion and homeostasis in chloroplasts in a light-dependent manner to modulate photosynthesis. Prevents excessive induction of non-photochemical quenching (NPQ) under continuous-light conditions. Indirectly promotes efficient inorganic carbon uptake into chloroplasts. The polypeptide is Potassium/proton antiporter CemA (Nephroselmis olivacea (Green alga)).